Consider the following 148-residue polypeptide: Inner membrane protein YccF (148 aa).

Over 1–14 the chain is Periplasmic; that stretch reads MRTVLNILNFVLGG. Residues 15–37 traverse the membrane as a helical segment; that stretch reads FATTLGWLLATLVSIVLIFTLPL. Over 38 to 76 the chain is Cytoplasmic; that stretch reads TRSCWEITKLSLVPYGNEAIHVDELNPAGKNVLLNTGGT. A helical transmembrane segment spans residues 77–99; sequence VLNIFWLIFFGWWLCLMHIATGI. The Periplasmic segment spans residues 100–102; sequence AQC. A helical transmembrane segment spans residues 103–125; it reads ISIIGIPVGIANFKIAAIALWPV. Residues 126-148 are Cytoplasmic-facing; that stretch reads GRRVVSVETAQAAREANARRRFE.

Its subcellular location is the cell inner membrane. The chain is Inner membrane protein YccF (yccF) from Escherichia coli (strain K12).